Consider the following 604-residue polypeptide: Aspartate--tRNA(Asp/Asn) ligase (604 aa).

An L-aspartate-binding site is contributed by Glu-187. Residues 211 to 214 (QQFK) are aspartate. The L-aspartate site is built by Arg-233 and His-461. 233–235 (RDE) contributes to the ATP binding site. An ATP-binding site is contributed by Glu-495. Arg-502 serves as a coordination point for L-aspartate. ATP is bound at residue 547–550 (GLDR).

It belongs to the class-II aminoacyl-tRNA synthetase family. Type 1 subfamily. In terms of assembly, homodimer.

It is found in the cytoplasm. The enzyme catalyses tRNA(Asx) + L-aspartate + ATP = L-aspartyl-tRNA(Asx) + AMP + diphosphate. Functionally, aspartyl-tRNA synthetase with relaxed tRNA specificity since it is able to aspartylate not only its cognate tRNA(Asp) but also tRNA(Asn). Reaction proceeds in two steps: L-aspartate is first activated by ATP to form Asp-AMP and then transferred to the acceptor end of tRNA(Asp/Asn). This Chlorobium luteolum (strain DSM 273 / BCRC 81028 / 2530) (Pelodictyon luteolum) protein is Aspartate--tRNA(Asp/Asn) ligase.